Reading from the N-terminus, the 508-residue chain is UBX domain-containing protein 4 (508 aa).

Positions 1-200 (MLWFQGAIPA…PTEDLTVRVE (200 aa)) are interaction with UBQLN1. At 1–413 (MLWFQGAIPA…VHSSSGDFWT (413 aa)) the chain is on the cytoplasmic side. The tract at residues 117–199 (GEASLANGSQ…RPTEDLTVRV (83 aa)) is disordered. A compositionally biased stretch (polar residues) spans 122–190 (ANGSQSEGSV…QEPSGCSNQR (69 aa)). Positions 315–393 (ERSTVARIQF…ELAPSASVVL (79 aa)) constitute a UBX domain. The stretch at 414-434 (LLGTVLYPFLAIWRLISNFLF) is an intramembrane region. Over 435–508 (SNPPPAQTSV…TWNGNSTQQM (74 aa)) the chain is Cytoplasmic. Positions 450 to 459 (ETSNLASSSN) are enriched in polar residues. The segment at 450–508 (ETSNLASSSNSEKREPVRKRVLEKRGEDFKKEGKIYRLRTQDDGEDENNTWNGNSTQQM) is disordered. A compositionally biased stretch (basic and acidic residues) spans 460-491 (SEKREPVRKRVLEKRGEDFKKEGKIYRLRTQD). T489 bears the Phosphothreonine mark. Residues 498-508 (NTWNGNSTQQM) show a composition bias toward polar residues.

Directly interacts with VCP. Interacts with UBQLN1. Forms a complex with VCP and UBQLN1.

The protein localises to the endoplasmic reticulum membrane. It is found in the nucleus envelope. In terms of biological role, involved in endoplasmic reticulum-associated protein degradation (ERAD). Acts as a platform to recruit both UBQLN1 and VCP to the ER during ERAD. This chain is UBX domain-containing protein 4 (UBXN4), found in Bos taurus (Bovine).